A 119-amino-acid polypeptide reads, in one-letter code: Methylglyoxal synthase (119 aa).

One can recognise an MGS-like domain in the interval 1–119; that stretch reads MKIALIAHDK…ESAKLIMADI (119 aa). Residues H8, K12, 34–37, and 54–55 each bind substrate; these read TGTT and SG. The active-site Proton donor/acceptor is D60. A substrate-binding site is contributed by H87.

Belongs to the methylglyoxal synthase family.

It catalyses the reaction dihydroxyacetone phosphate = methylglyoxal + phosphate. Functionally, catalyzes the formation of methylglyoxal from dihydroxyacetone phosphate. In Clostridium perfringens (strain ATCC 13124 / DSM 756 / JCM 1290 / NCIMB 6125 / NCTC 8237 / Type A), this protein is Methylglyoxal synthase.